The following is a 911-amino-acid chain: Anoctamin-6 (911 aa).

Over 1 to 301 (MQMMTRKVLL…YGEKIGIYFA (301 aa)) the chain is Cytoplasmic. A helical membrane pass occupies residues 302-322 (WLGYYTQMLLLAAVVGVACFL). The Extracellular portion of the chain corresponds to 323-376 (YGYLDQDNCTWSKEVCDPDIGGQILMCPQCDRLCPFWRLNITCESSKKLCIFDS). A glycan (N-linked (GlcNAc...) asparagine) is linked at Asn-330. 5 disulfides stabilise this stretch: Cys-331–Cys-372, Cys-338–Cys-365, Cys-349–Cys-807, Cys-352–Cys-356, and Cys-596–Cys-601. Asn-362 carries N-linked (GlcNAc...) asparagine glycosylation. The chain crosses the membrane as a helical span at residues 377-397 (FGTLIFAVFMGVWVTLFLEFW). Topologically, residues 398–456 (KRRQAELEYEWDTVELQQEEQARPEYEAQCNHVVINEITQEEERIPFTTCGKCIRVTLC) are cytoplasmic. Residues 457 to 477 (ASAVFFWILLIIASVIGIIVY) traverse the membrane as a helical segment. Residues 478–510 (RLSVFIVFSTTLPKNPNGTDPIQKYLTPQMATS) are Extracellular-facing. N-linked (GlcNAc...) asparagine glycosylation occurs at Asn-494. A helical transmembrane segment spans residues 511–531 (ITASIISFIIIMILNTIYEKV). Topologically, residues 532–552 (AIMITNFELPRTQTDYENSLT) are cytoplasmic. A helical transmembrane segment spans residues 553–573 (MKMFLFQFVNYYSSCFYIAFF). Residues 574 to 602 (KGKFVGYPGDPVYLLGKYRSEECDPGGCL) are Extracellular-facing. Residues 603–622 (LELTTQLTIIMGGKAIWNNI) form a helical membrane-spanning segment. The Cytoplasmic segment spans residues 623 to 664 (QEVLLPWVMNLIGRYKRVSGSEKITPRWEQDYHLQPMGKLGL). Residues Glu-624, Glu-667, and Glu-670 each contribute to the Ca(2+) site. 2 helical membrane-spanning segments follow: residues 665-685 (FYEY…VASF) and 686-706 (PLAP…DAWK). The Cytoplasmic portion of the chain corresponds to 707–723 (LTTQFRRMVPEKAQDIG). Residues 724 to 744 (AWQPIMQGIAILAVVTNAMII) traverse the membrane as a helical segment. Residues 745–837 (AFTSDMIPRL…YWHVIAAKLA (93 aa)) are Extracellular-facing. N-linked (GlcNAc...) asparagine glycosylation is found at Asn-778, Asn-785, and Asn-803. Residues 838–858 (FIIVMEHIIYSVKFFISYAIP) traverse the membrane as a helical segment. Topologically, residues 859 to 911 (DVSKITKSKIKREKYLTQKLLHESHLKDLTKNMGIIAERIGGTVDNSVRPKLE) are cytoplasmic.

It belongs to the anoctamin family. Homodimer. In terms of tissue distribution, predominant expression seen in epithelial tissues. Also found in skeletal system where it is primarily expressed in osteoblasts.

It is found in the cell membrane. It carries out the reaction a 1,2-diacyl-sn-glycero-3-phospho-L-serine(in) = a 1,2-diacyl-sn-glycero-3-phospho-L-serine(out). It catalyses the reaction a beta-D-galactosyl-(1&lt;-&gt;1')-N-acylsphing-4-enine(out) = a beta-D-galactosyl-(1&lt;-&gt;1')-N-acylsphing-4-enine(in). The enzyme catalyses a 1,2-diacyl-sn-glycero-3-phosphocholine(in) = a 1,2-diacyl-sn-glycero-3-phosphocholine(out). With respect to regulation, exhibits synergistic gating by Ca(2+) and voltage. Inhibited by some non-specific cation channel blockers such as: ruthenium red, 2-aminoethyl diphenylborinate (2APB), gadolinium and cadmium ions. Small-conductance calcium-activated nonselective cation (SCAN) channel which acts as a regulator of phospholipid scrambling in platelets, osteoblasts and fetal thymocytes. Phospholipid scrambling results in surface exposure of phosphatidylserine which in platelets is essential to trigger the clotting system whereas in osteoblasts is essential for the deposition of hydroxyapatite during bone mineralization. Has calcium-dependent phospholipid scramblase activity; scrambles phosphatidylserine, phosphatidylcholine and galactosylceramide. Can generate outwardly rectifying chloride channel currents in airway epithelial cells and Jurkat T lymphocytes. The chain is Anoctamin-6 (Ano6) from Mus musculus (Mouse).